The following is a 185-amino-acid chain: uncharacterized protein (185 aa).

It to M.thermoautotrophicum MTH236.

This is an uncharacterized protein from Methanocaldococcus jannaschii (strain ATCC 43067 / DSM 2661 / JAL-1 / JCM 10045 / NBRC 100440) (Methanococcus jannaschii).